A 289-amino-acid polypeptide reads, in one-letter code: Diaminopimelate epimerase (289 aa).

N11 and N78 together coordinate substrate. Residue C87 is the Proton donor of the active site. Substrate is bound by residues 88–89 (GN), N163, N199, and 217–218 (ER). C226 acts as the Proton acceptor in catalysis. 227–228 (GT) contributes to the substrate binding site.

Belongs to the diaminopimelate epimerase family. In terms of assembly, homodimer.

The protein resides in the cytoplasm. The catalysed reaction is (2S,6S)-2,6-diaminopimelate = meso-2,6-diaminopimelate. The protein operates within amino-acid biosynthesis; L-lysine biosynthesis via DAP pathway; DL-2,6-diaminopimelate from LL-2,6-diaminopimelate: step 1/1. Catalyzes the stereoinversion of LL-2,6-diaminopimelate (L,L-DAP) to meso-diaminopimelate (meso-DAP), a precursor of L-lysine and an essential component of the bacterial peptidoglycan. In Rhodococcus jostii (strain RHA1), this protein is Diaminopimelate epimerase.